The chain runs to 1093 residues: Semaphorin 5c (1093 aa).

Residues 1 to 34 form the signal peptide; the sequence is MNMLILKLPKMFSQLWLLLILSLLTLEGPQPSTG. Residue N48 is glycosylated (N-linked (GlcNAc...) asparagine). The region spanning 50 to 495 is the Sema domain; the sequence is SRYISYQDLM…TDLALTRIPA (446 aa). Intrachain disulfides connect C118-C128 and C146-C155. 4 N-linked (GlcNAc...) asparagine glycosylation sites follow: N162, N182, N285, and N295. Disulfide bonds link C271-C376 and C296-C338. N-linked (GlcNAc...) asparagine glycosylation occurs at N341. A PSI domain is found at 497–546; the sequence is HCSRHVSQSSCLNSMDPYCGWNELVERCMPQPQDSSVLQHWHQAPQITCP. TSP type-1 domains lie at 553–605, 607–663, and 671–726; these read DGGW…TNCT, HGGW…PPCP, and DGGW…QSCQ. Residue N603 is glycosylated (N-linked (GlcNAc...) asparagine). Cystine bridges form between C619-C656, C623-C662, C634-C646, C683-C720, C687-C725, and C698-C710. Residue N745 is glycosylated (N-linked (GlcNAc...) asparagine). TSP type-1 domains lie at 794–834, 850–901, and 904–953; these read DSAD…HACP, HGEW…VPCE, and LGWS…NECE. Disulfide bonds link C862/C895, C866/C900, and C877/C885. The helical transmembrane segment at 960-980 threads the bilayer; it reads TATLPIVIFVGLLFTVACCLA. N998 and N1046 each carry an N-linked (GlcNAc...) asparagine glycan. The tract at residues 1018-1056 is disordered; sequence PTKDYYDQRPKRQSSFRMPAKTSNLGNGNGTLNRNNMHQ. Residues 1041–1053 are compositionally biased toward low complexity; the sequence is NLGNGNGTLNRNN.

Belongs to the semaphorin family. In egg chambers, high levels of expression in the follicle cells, with little to no expression in the germ cells (at protein level). In stage 3 to 7 egg chambers, planar polarized at the basal epithelial surface (at protein level).

It localises to the apical cell membrane. It is found in the lateral cell membrane. The protein resides in the endosome. Its function is as follows. Regulates the motility of migrating epithelial cells by providing guidance cues within the migratory environment and may also play a role in development of the olfactory system. May act as a positive axonal guidance cue. Function in neurons is essential for adult survival and is important for climbing behavior. Promotes collective migration of follicular epithelial cells in egg chambers, likely by acting at the leading edge of the basal epithelium cells to provide guidance cues across the cell boundary to the trailing edge of the cell ahead. The transmembrane receptor PlexA on the trailing edge of the cell ahead, appears to transduce this signal to suppress the formation of protrusions. Involved in olfactory avoidance behavior. This is Semaphorin 5c from Drosophila melanogaster (Fruit fly).